The chain runs to 504 residues: Maturase K (504 aa).

It belongs to the intron maturase 2 family. MatK subfamily.

The protein localises to the plastid. It is found in the chloroplast. Usually encoded in the trnK tRNA gene intron. Probably assists in splicing its own and other chloroplast group II introns. The sequence is that of Maturase K from Taxus baccata (English yew).